The primary structure comprises 134 residues: Arsenate reductase (134 aa).

Catalysis depends on nucleophile residues Cys-11, Cys-83, and Cys-90. Intrachain disulfides connect Cys-11–Cys-83 and Cys-83–Cys-90.

Belongs to the low molecular weight phosphotyrosine protein phosphatase family. Thioredoxin-coupled ArsC subfamily.

The protein resides in the cytoplasm. It catalyses the reaction arsenate + [thioredoxin]-dithiol + H(+) = arsenite + [thioredoxin]-disulfide + H2O. Functionally, catalyzes the reduction of arsenate [As(V)] to arsenite [As(III)]. The protein is Arsenate reductase of Bacillus cereus (strain ZK / E33L).